A 342-amino-acid chain; its full sequence is N-alpha-acetyl-L-2,4-diaminobutyric acid deacetylase (342 aa).

The interval 103 to 124 is disordered; sequence TAGRRTSPMDGGNLNRSFPGDP.

The protein belongs to the DoeB deacetylase family. Zn(2+) serves as cofactor.

The protein resides in the cytoplasm. It carries out the reaction (2S)-2-acetamido-4-aminobutanoate + H2O = L-2,4-diaminobutanoate + acetate. Its function is as follows. Involved in the degradation of ectoine, which allows H.elongata to utilize ectoine as both a carbon and a nitrogen source for growth. Catalyzes the deacetylation of N-alpha-acetyl-L-2,4-diaminobutyrate (N-alpha-Ac-DABA) to yield L-2,4-diaminobutyrate (DABA). The chain is N-alpha-acetyl-L-2,4-diaminobutyric acid deacetylase from Halomonas elongata (strain ATCC 33173 / DSM 2581 / NBRC 15536 / NCIMB 2198 / 1H9).